A 249-amino-acid polypeptide reads, in one-letter code: Segregation and condensation protein A (249 aa).

It belongs to the ScpA family. Component of a cohesin-like complex composed of ScpA, ScpB and the Smc homodimer, in which ScpA and ScpB bind to the head domain of Smc. The presence of the three proteins is required for the association of the complex with DNA.

It is found in the cytoplasm. Its function is as follows. Participates in chromosomal partition during cell division. May act via the formation of a condensin-like complex containing Smc and ScpB that pull DNA away from mid-cell into both cell halves. This chain is Segregation and condensation protein A, found in Oceanobacillus iheyensis (strain DSM 14371 / CIP 107618 / JCM 11309 / KCTC 3954 / HTE831).